A 243-amino-acid chain; its full sequence is Voltage-gated monoatomic cation channel TMEM109 (243 aa).

A signal peptide spans 1–33 (MAGAHSNPSWSRHLFKAVLMVLGALLLVHSASA). At 34-83 (QTHREFASPGQQKRESSADILTEIGRSLKETLDTWLGPETMHVISETLLQ) the chain is on the lumenal side. The helical transmembrane segment at 84-104 (VMWAISSAISVACFALSGIAA) threads the bilayer. Residues 105–135 (QLLSALGLDGEQLTQVLKLSPSQVQTLLLWG) are Cytoplasmic-facing. A helical transmembrane segment spans residues 136 to 156 (AAALVIYWLLSLLLGLVLALL). Over 157 to 185 (GRILGGLKLVLFVAGFVGLVRSVPDPSTR) the chain is Lumenal. A helical membrane pass occupies residues 186–205 (ALLLLALLTVFALLSRLTGS). Residues 206-243 (RSSGTHLEAKVRGLERQIEELRGRQRRAAKIPRSMEEE) are Cytoplasmic-facing.

As to quaternary structure, homooligomer. Interacts with CRYAB; in the cellular response to DNA damage.

It localises to the nucleus outer membrane. The protein localises to the endoplasmic reticulum membrane. Its subcellular location is the sarcoplasmic reticulum membrane. The enzyme catalyses K(+)(in) = K(+)(out). It catalyses the reaction Ca(2+)(in) = Ca(2+)(out). In terms of biological role, functions as a voltage-gated monoatomic cation channel permeable to both potassium and calcium. Plays a role in the cellular response to DNA damage. The sequence is that of Voltage-gated monoatomic cation channel TMEM109 from Rattus norvegicus (Rat).